Reading from the N-terminus, the 309-residue chain is Elongation factor Ts (309 aa).

An involved in Mg(2+) ion dislocation from EF-Tu region spans residues 82-85 (TDFV).

It belongs to the EF-Ts family.

The protein localises to the cytoplasm. Associates with the EF-Tu.GDP complex and induces the exchange of GDP to GTP. It remains bound to the aminoacyl-tRNA.EF-Tu.GTP complex up to the GTP hydrolysis stage on the ribosome. This Rickettsia rickettsii (strain Iowa) protein is Elongation factor Ts.